The sequence spans 349 residues: Ferredoxin--NADP reductase (349 aa).

Residues aspartate 35, glutamine 43, tyrosine 48, valine 88, phenylalanine 123, aspartate 288, and threonine 329 each contribute to the FAD site.

The protein belongs to the ferredoxin--NADP reductase type 2 family. Homodimer. FAD serves as cofactor.

It carries out the reaction 2 reduced [2Fe-2S]-[ferredoxin] + NADP(+) + H(+) = 2 oxidized [2Fe-2S]-[ferredoxin] + NADPH. The chain is Ferredoxin--NADP reductase from Colwellia psychrerythraea (strain 34H / ATCC BAA-681) (Vibrio psychroerythus).